We begin with the raw amino-acid sequence, 345 residues long: Trace amine-associated receptor 6 (345 aa).

Residues 1–32 (MSSNSSLLVAVQLCYPNVNGSCVETLYSPGSR) lie on the Extracellular side of the membrane. 2 N-linked (GlcNAc...) asparagine glycosylation sites follow: N4 and N19. 2 cysteine pairs are disulfide-bonded: C22/C186 and C105/C190. Residues 33–53 (VILYIVFGFGAVLAVFGNLLV) form a helical membrane-spanning segment. Residues 54–68 (MISILHFKQLHSPTN) are Cytoplasmic-facing. Residues 69–89 (FLVASLACADFLVGVTVMPFS) form a helical membrane-spanning segment. At 90–107 (MVRTVESCWYFGRSFCTF) the chain is on the extracellular side. Residues 108 to 128 (HTCCDVAFCYSSLFHLCFISI) traverse the membrane as a helical segment. Over 129–147 (DRYIAVTDPLVYPTKFTVS) the chain is Cytoplasmic. Residues 148-168 (VSGICISVSWILPLMYSGAVF) form a helical membrane-spanning segment. Over 169-202 (YTGVYDDGLEELSDALNCIGGCQTVVNQNWVLID) the chain is Extracellular. A helical membrane pass occupies residues 203-223 (CLSFFIPTFIMIILYGNIFLV). At 224 to 259 (ARRQAKKIENTGSKTESSSESYKARVARRERKAAKT) the chain is on the cytoplasmic side. Residues 260 to 276 (LGVTVVAFMISWLPYSI) form a helical membrane-spanning segment. At 277–282 (DSLIDA) the chain is on the extracellular side. A helical membrane pass occupies residues 283-302 (FMGFITPAYIYEICCWCAYY). The Cytoplasmic portion of the chain corresponds to 303 to 345 (NSAMNPLIYALFYPWFRKAIKVIVTGQVLKNSSATMNLFSEHI).

It belongs to the G-protein coupled receptor 1 family.

Its subcellular location is the cell membrane. Its function is as follows. Olfactory receptor specific for trace amines, such as beta-phenylethylamine (beta-PEA). Trace amine compounds are enriched in animal body fluids and act on trace amine-associated receptors (TAARs) to elicit both intraspecific and interspecific innate behaviors. Beta-PEA-binding causes a conformation change that triggers signaling via G(s)-class of G alpha proteins (GNAL or GNAS). In Pan troglodytes (Chimpanzee), this protein is Trace amine-associated receptor 6 (TAAR6).